The chain runs to 74 residues: Molt-inhibiting hormone (74 aa).

Position 1 is a pyrrolidone carboxylic acid (Gln-1). Cystine bridges form between Cys-7-Cys-43, Cys-23-Cys-39, and Cys-26-Cys-52. Val-72 is subject to Valine amide.

The protein localises to the secreted. In terms of biological role, inhibits Y-organs where molting hormone (ecdysteroid) is secreted. A molting cycle is initiated when MIH secretion diminishes or stops. The protein is Molt-inhibiting hormone of Procambarus bouvieri (Mexican crayfish).